Reading from the N-terminus, the 693-residue chain is Elongation factor G (693 aa).

The tr-type G domain maps to 8–283 (NRCRNIGIMA…AVVDYLPSPL (276 aa)). GTP-binding positions include 17 to 24 (AHIDAGKT), 81 to 85 (DTPGH), and 135 to 138 (NKMD).

It belongs to the TRAFAC class translation factor GTPase superfamily. Classic translation factor GTPase family. EF-G/EF-2 subfamily.

Its subcellular location is the cytoplasm. Functionally, catalyzes the GTP-dependent ribosomal translocation step during translation elongation. During this step, the ribosome changes from the pre-translocational (PRE) to the post-translocational (POST) state as the newly formed A-site-bound peptidyl-tRNA and P-site-bound deacylated tRNA move to the P and E sites, respectively. Catalyzes the coordinated movement of the two tRNA molecules, the mRNA and conformational changes in the ribosome. The sequence is that of Elongation factor G from Acidobacterium capsulatum (strain ATCC 51196 / DSM 11244 / BCRC 80197 / JCM 7670 / NBRC 15755 / NCIMB 13165 / 161).